We begin with the raw amino-acid sequence, 395 residues long: Chalcone synthase 3 (395 aa).

Residue V2 is modified to N-acetylvaline. C169 is a catalytic residue.

The protein belongs to the thiolase-like superfamily. Chalcone/stilbene synthases family.

It carries out the reaction (E)-4-coumaroyl-CoA + 3 malonyl-CoA + 3 H(+) = 2',4,4',6'-tetrahydroxychalcone + 3 CO2 + 4 CoA. It participates in secondary metabolite biosynthesis; flavonoid biosynthesis. In terms of biological role, the primary product of this enzyme is 4,2',4',6'-tetrahydroxychalcone (also termed naringenin-chalcone or chalcone) which can under specific conditions spontaneously isomerize into naringenin. The protein is Chalcone synthase 3 (CHS3) of Sinapis alba (White mustard).